The following is a 1115-amino-acid chain: Integrin alpha-PS3 (1115 aa).

The N-terminal stretch at 1–24 is a signal peptide; sequence MNAESTMFPHIFLALLALISHIEA. Residues 25–1054 are Extracellular-facing; that stretch reads FNFMPRPSRV…PNIISKHQET (1030 aa). FG-GAP repeat units follow at residues 39 to 99, 113 to 174, 193 to 246, 278 to 335, 336 to 397, 398 to 453, and 460 to 522; these read KHLK…VCSP, SEYT…STPQ, DNGN…VDNP, IPTP…GKSI, HKYH…FNFE, RQIL…GLRD, and DAPS…SESR. N-linked (GlcNAc...) asparagine glycans are attached at residues Asn46, Asn82, and Asn166. A glycan (N-linked (GlcNAc...) asparagine) is linked at Asn438. N-linked (GlcNAc...) asparagine glycosylation is found at Asn696, Asn845, Asn868, and Asn964. A helical transmembrane segment spans residues 1055–1075; sequence GLPIWIIIVSVIGGLLLLSAI. The Cytoplasmic segment spans residues 1076-1115; the sequence is SYLLYKFGFFNRTKKDELDRLVQQNPVEPEAENLNSGGNN.

It belongs to the integrin alpha chain family. Heterodimer of an alpha and a beta subunit. The alpha subunit is composed of a heavy and a light chain linked by a disulfide bond. Interacts with mys/beta-PS and Itgbn. As to expression, expressed in embryonic and larval hemocytes (at protein level). Expressed in tissues undergoing invagination, tissue movement and morphogenesis such as salivary gland, trachea, midgut endoderm, dorsal vessel, midline of the ventral nerve cord, amnioserosa and the amnioproctodeal invagination. Expressed in the mushroom body neuropil, brain areas that contain mushroom body processes in synaptic contact with other neurons. In egg chambers, expressed in border cells, in stretch cells and in dorsal appendage primordia.

The protein localises to the apical cell membrane. It is found in the lateral cell membrane. The protein resides in the cytoplasm. Functionally, integrin alpha-PS3/beta-PS is a receptor for laminin. Also binds to wb. Important during embryogenesis for the development of the trachea, dorsal vessel and salivary gland, as well as for dorsal closure. Required for short-term memory processes. Minor involvement in the establishment of the oocyte anterior-posterior length. Plays a role in timely border cell migration during oogenesis, probably mediated by JNK signaling. Integrin alpha-PS3/Itgbn is required for effective phagocytosis of apoptotic cells during embryonic development and for the phagocytic elimination of S.aureus by mediating the binding of S.aureus peptidoglycan to larval hemocytes, which probably activates a signaling pathway involving Rac1 and Rac2. Integrin alpha-PS3/Itgbn also regulates Fak activity during neuromuscular junction (NMJ) growth and is required for its activation in presynapsis of NMJs. Seems to be dispensable for major morphogenetic processes. This Drosophila melanogaster (Fruit fly) protein is Integrin alpha-PS3 (scb).